Reading from the N-terminus, the 143-residue chain is MAVERTLSIIKPDAVAKNVIGEIYTRFEKAGLKIVAARMMHLSREQAEGFYAVHKERPFFKDLVDFMISGPVIVQALEGENAVALHRDIMGATNPKDAAPGTIRADFAESIDENAVHGSDSLENAGKEIAFFFKPEEICARTR.

The ATP site is built by lysine 11, phenylalanine 59, arginine 87, threonine 93, arginine 104, and asparagine 114. The active-site Pros-phosphohistidine intermediate is histidine 117.

Belongs to the NDK family. Homotetramer. The cofactor is Mg(2+).

Its subcellular location is the cytoplasm. It catalyses the reaction a 2'-deoxyribonucleoside 5'-diphosphate + ATP = a 2'-deoxyribonucleoside 5'-triphosphate + ADP. The enzyme catalyses a ribonucleoside 5'-diphosphate + ATP = a ribonucleoside 5'-triphosphate + ADP. In terms of biological role, major role in the synthesis of nucleoside triphosphates other than ATP. The ATP gamma phosphate is transferred to the NDP beta phosphate via a ping-pong mechanism, using a phosphorylated active-site intermediate. In Thioalkalivibrio sulfidiphilus (strain HL-EbGR7), this protein is Nucleoside diphosphate kinase.